The sequence spans 597 residues: Protein disulfide isomerase-like 1-4 (597 aa).

The signal sequence occupies residues 1–25 (MAFRVLLLFSLTALLIFSAVSPSFA). 2 stretches are compositionally biased toward acidic residues: residues 37-49 (LSFL…DDVP) and 61-84 (DEFE…EGDF). The segment at 37–101 (LSFLEDLKED…SDPLPTPEID (65 aa)) is disordered. The region spanning 85-208 (SDLGNPDSDP…IVTWVKKKIG (124 aa)) is the Thioredoxin 1 domain. The N-linked (GlcNAc...) asparagine glycan is linked to Asn112. Residues Cys132 and Cys135 each act as nucleophile in the active site. Cysteines 132 and 135 form a disulfide. 2 N-linked (GlcNAc...) asparagine glycosylation sites follow: Asn213 and Asn342. Positions 429–550 (FYKSDPIPEK…FYKFLRKHAT (122 aa)) constitute a Thioredoxin 2 domain. Active-site nucleophile residues include Cys471 and Cys474. Cysteines 471 and 474 form a disulfide. N-linked (GlcNAc...) asparagine glycosylation is present at Asn524. Positions 555–597 (LEKPASTESPKTAESTPKVETTETKESPDSTTKSSQSDSKDEL) are disordered. Residues 560 to 573 (STESPKTAESTPKV) show a composition bias toward polar residues. The short motif at 594 to 597 (KDEL) is the Prevents secretion from ER element.

Belongs to the protein disulfide isomerase family. Interacts with MEE8 and MED37A. As to expression, expressed in germinating seedling, including the cotyledons and hypocotyl, in vascular tissues, in pollen grains, root tips, leaf trichomes, developing seeds and siliques.

It localises to the endoplasmic reticulum lumen. The protein resides in the golgi apparatus. It is found in the vacuole. The protein localises to the nucleus. Its subcellular location is the secreted. It localises to the cell wall. The catalysed reaction is Catalyzes the rearrangement of -S-S- bonds in proteins.. Functionally, acts as a protein-folding catalyst that interacts with nascent polypeptides to catalyze the formation, isomerization, and reduction or oxidation of disulfide bonds. The polypeptide is Protein disulfide isomerase-like 1-4 (PDIL1-4) (Arabidopsis thaliana (Mouse-ear cress)).